The following is a 288-amino-acid chain: Leucine-rich repeat-containing protein 72 (288 aa).

LRR repeat units follow at residues 47–68 (DVFELFLSQKELTEVIDLSRFK), 69–90 (KLKYLWLHHNKLHGITFLTRNY), 91–112 (CLAELYLNNNAIFDIEGLHYLP), and 113–134 (SLHILLLHHNELINLDATVKEL). The 39-residue stretch at 148-186 (NPLCQYNLYRLYIIYHLPGVELLDRNQVTEKERRSMITL) folds into the LRRCT domain.

This Bos taurus (Bovine) protein is Leucine-rich repeat-containing protein 72 (LRRC72).